The primary structure comprises 202 residues: ATP synthase subunit b 1 (202 aa).

The chain crosses the membrane as a helical span at residues 17-37 (IAAVLCFSVLVPLVAMAAEGG).

This sequence belongs to the ATPase B chain family. As to quaternary structure, F-type ATPases have 2 components, F(1) - the catalytic core - and F(0) - the membrane proton channel. F(1) has five subunits: alpha(3), beta(3), gamma(1), delta(1), epsilon(1). F(0) has three main subunits: a(1), b(2) and c(10-14). The alpha and beta chains form an alternating ring which encloses part of the gamma chain. F(1) is attached to F(0) by a central stalk formed by the gamma and epsilon chains, while a peripheral stalk is formed by the delta and b chains.

The protein resides in the cell inner membrane. F(1)F(0) ATP synthase produces ATP from ADP in the presence of a proton or sodium gradient. F-type ATPases consist of two structural domains, F(1) containing the extramembraneous catalytic core and F(0) containing the membrane proton channel, linked together by a central stalk and a peripheral stalk. During catalysis, ATP synthesis in the catalytic domain of F(1) is coupled via a rotary mechanism of the central stalk subunits to proton translocation. Its function is as follows. Component of the F(0) channel, it forms part of the peripheral stalk, linking F(1) to F(0). This Syntrophus aciditrophicus (strain SB) protein is ATP synthase subunit b 1.